A 511-amino-acid chain; its full sequence is Probable dolichyl pyrophosphate Glc1Man9GlcNAc2 alpha-1,3-glucosyltransferase (511 aa).

The next 11 helical transmembrane spans lie at 4-24 (LFWH…PAYH), 94-112 (VYFQ…VLGV), 124-144 (DTQQ…LIFV), 151-171 (YNGL…RQRF), 210-230 (VVSA…PFAV), 300-320 (PAIT…PILV), 332-352 (LVFL…GWHV), 356-370 (AILM…LTLV), 377-394 (YAYV…PLLF), 432-452 (WLYM…SFLL), and 469-491 (YSAL…ISWG).

This sequence belongs to the ALG6/ALG8 glucosyltransferase family.

The protein localises to the endoplasmic reticulum membrane. The enzyme catalyses an alpha-D-Glc-(1-&gt;3)-alpha-D-Man-(1-&gt;2)-alpha-D-Man-(1-&gt;2)-alpha-D-Man-(1-&gt;3)-[alpha-D-Man-(1-&gt;2)-alpha-D-Man-(1-&gt;3)-[alpha-D-Man-(1-&gt;2)-alpha-D-Man-(1-&gt;6)]-alpha-D-Man-(1-&gt;6)]-beta-D-Man-(1-&gt;4)-beta-D-GlcNAc-(1-&gt;4)-alpha-D-GlcNAc-diphospho-di-trans,poly-cis-dolichol + a di-trans,poly-cis-dolichyl beta-D-glucosyl phosphate = an alpha-D-Glc-(1-&gt;3)-alpha-D-Glc-(1-&gt;3)-alpha-D-Man-(1-&gt;2)-alpha-D-Man-(1-&gt;2)-alpha-D-Man-(1-&gt;3)-[alpha-D-Man-(1-&gt;2)-alpha-D-Man-(1-&gt;3)-[alpha-D-Man-(1-&gt;2)-alpha-D-Man-(1-&gt;6)]-alpha-D-Man-(1-&gt;6)]-beta-D-Man-(1-&gt;4)-beta-D-GlcNAc-(1-&gt;4)-alpha-D-GlcNAc-diphospho-di-trans,poly-cis-dolichol + a di-trans,poly-cis-dolichyl phosphate + H(+). It participates in protein modification; protein glycosylation. In terms of biological role, adds the second glucose residue to the lipid-linked oligosaccharide precursor for N-linked glycosylation. Transfers glucose from dolichyl phosphate glucose (Dol-P-Glc) onto the lipid-linked oligosaccharide Glc(1)Man(9)GlcNAc(2)-PP-Dol. Functions in developmental processes such as germband extension, the apical constriction of mesoderm precursor cells and ventral furrow formation in early embryogenesis prior to gastrulation. Involved in the glycosylation and intracellular distribution of shg (E-cadherin). Function in cell intercalation in the lateral epidermis during germband extension may be due to its effect on shg. The chain is Probable dolichyl pyrophosphate Glc1Man9GlcNAc2 alpha-1,3-glucosyltransferase from Drosophila melanogaster (Fruit fly).